Consider the following 104-residue polypeptide: Large ribosomal subunit protein uL24 (104 aa).

It belongs to the universal ribosomal protein uL24 family. In terms of assembly, part of the 50S ribosomal subunit.

In terms of biological role, one of two assembly initiator proteins, it binds directly to the 5'-end of the 23S rRNA, where it nucleates assembly of the 50S subunit. One of the proteins that surrounds the polypeptide exit tunnel on the outside of the subunit. This chain is Large ribosomal subunit protein uL24, found in Escherichia coli O81 (strain ED1a).